The primary structure comprises 126 residues: Large ribosomal subunit protein bL12 (126 aa).

The protein belongs to the bacterial ribosomal protein bL12 family. As to quaternary structure, homodimer. Part of the ribosomal stalk of the 50S ribosomal subunit. Forms a multimeric L10(L12)X complex, where L10 forms an elongated spine to which 2 to 4 L12 dimers bind in a sequential fashion. Binds GTP-bound translation factors.

Forms part of the ribosomal stalk which helps the ribosome interact with GTP-bound translation factors. Is thus essential for accurate translation. In Desulforudis audaxviator (strain MP104C), this protein is Large ribosomal subunit protein bL12.